The chain runs to 102 residues: Large ribosomal subunit protein uL23 (102 aa).

Belongs to the universal ribosomal protein uL23 family. In terms of assembly, part of the 50S ribosomal subunit. Contacts protein L29, and trigger factor when it is bound to the ribosome.

One of the early assembly proteins it binds 23S rRNA. One of the proteins that surrounds the polypeptide exit tunnel on the outside of the ribosome. Forms the main docking site for trigger factor binding to the ribosome. In Methylobacillus flagellatus (strain ATCC 51484 / DSM 6875 / VKM B-1610 / KT), this protein is Large ribosomal subunit protein uL23.